The primary structure comprises 62 residues: MKTLVLFIIFGLAALFLLSSANELEETERGCQKFFWTCHPGQPPCCSGLACTWPTEICILGR.

The first 21 residues, 1–21, serve as a signal peptide directing secretion; sequence MKTLVLFIIFGLAALFLLSSA. A propeptide spanning residues 22-29 is cleaved from the precursor; it reads NELEETER. Cystine bridges form between cysteine 31-cysteine 46, cysteine 38-cysteine 51, and cysteine 45-cysteine 58.

It belongs to the neurotoxin 10 (Hwtx-1) family. 30 (Jztx-14) subfamily. In terms of tissue distribution, expressed by the venom gland.

It localises to the secreted. Its function is as follows. Probable ion channel inhibitor. The chain is U8-theraphotoxin-Cg1a 1 from Chilobrachys guangxiensis (Chinese earth tiger tarantula).